We begin with the raw amino-acid sequence, 382 residues long: MLRWTVHLEGGPRRVNHAAVAVGHRVYSFGGYCSGEDYETLRQIDVHIFNAVSLRWTKLPPVRPAARGQAPVVPYMRYGHSTVLIDDTVFLWGGRNDTEGACNVLYAFDVNTHKWSTPRVSGTVPGARDGHSACVLGKTMYIFGGYEQLADCFSNDIHKLDTSTMTWTLICTKGNPARWRDFHSATMLGSHMYVFGGRADRFGPFHSNNEIYCNRIRVFDTRTEAWLDCPPTPVLPEGRRSHSAFGYNGELYIFGGYNARLNRHFHDLWKFNPVSFTWKKIEPKGKGPCPRRRQCCCIVGDKIVLFGGTSPSPEEGLGDEFDLIDHSDLHILDFSPSLKTLCKLAVIQYNLDQSCLPHDIRWELNAMTTNSNISRPIVSSHG.

5 Kelch repeats span residues 25 to 77 (RVYS…PYMR), 88 to 138 (TVFL…VLGK), 139 to 189 (TMYI…TMLG), 191 to 249 (HMYV…GYNG), and 251 to 301 (LYIF…IVGD).

As to quaternary structure, component of a CRL2(KLHDC3) complex, also named ECS(KLHDC3) complex, composed of CUL2, Elongin BC (ELOB and ELOC), RBX1 and substrate-specific adapter KLHDC3. May form oligomers as a KLHDC3-ELOB-ELOC complex; this interaction is likely autoinhibitory for the E3 ligase complex.

The protein localises to the cytoplasm. The protein operates within protein modification; protein ubiquitination. Substrate-recognition component of a Cul2-RING (CRL2) E3 ubiquitin-protein ligase complex of the DesCEND (destruction via C-end degrons) pathway, which recognizes a C-degron located at the extreme C terminus of target proteins, leading to their ubiquitination and degradation. The C-degron recognized by the DesCEND pathway is usually a motif of less than ten residues and can be present in full-length proteins, truncated proteins or proteolytically cleaved forms. The CRL2(KLHDC3) complex specifically recognizes proteins with a glycine (Gly) at the C-terminus, leading to their ubiquitination and degradation: recognizes the C-terminal -Arg-(Xaa)n-Arg-Gly, -Arg-(Xaa)n-Lys-Gly, and -Arg-(Xaa)n-Gln-Gly degrons. The CRL2(KLHDC3) complex mediates ubiquitination and degradation of truncated SELENOV and SEPHS2 selenoproteins produced by failed UGA/Sec decoding, which end with a glycine. May be involved in meiotic recombination process. The protein is Kelch domain-containing protein 3 of Bos taurus (Bovine).